Here is a 101-residue protein sequence, read N- to C-terminus: Protein snet-1 (101 aa).

The signal sequence occupies residues 1 to 20 (MARFTPLLMILLALVPLYYS).

May be degraded by the nep-2 peptidase. Expressed in coelomocytes, the ASK sensory neurons and interneurons AIB, AIM and PVQ.

It localises to the secreted. The protein localises to the perikaryon. Negatively regulates chemotaxis and olfactory plasticity which is the change from positive chemotaxis to dispersal after prolonged exposure to an odorant. May be down-regulated in response to pheromone exposure, resulting in promotion of olfactory plasticity. The protein is Protein snet-1 of Caenorhabditis elegans.